The sequence spans 113 residues: UPF0145 protein TK1926 (113 aa).

The protein belongs to the UPF0145 family.

The chain is UPF0145 protein TK1926 from Thermococcus kodakarensis (strain ATCC BAA-918 / JCM 12380 / KOD1) (Pyrococcus kodakaraensis (strain KOD1)).